We begin with the raw amino-acid sequence, 5641 residues long: Cyclochlorotine synthetase (5641 aa).

Residues Pro-95–Gln-124 are disordered. Basic and acidic residues predominate over residues Lys-111–Gln-124. The tract at residues Phe-217–Arg-622 is adenylation (A) domain 1. A Carrier 1 domain is found at Thr-816 to Ala-892. The interval Lys-821–Lys-889 is thiolation (T) domain 1. An O-(pantetheine 4'-phosphoryl)serine modification is found at Ser-853. The interval Glu-926–Pro-1333 is condensation (C) domain 1. An adenylation (A) domain 2 region spans residues Asp-1390–Ile-1768. The Carrier 2 domain occupies Ile-1902–Thr-1978. The interval Lys-1907–Thr-1975 is thiolation (T) domain 2. O-(pantetheine 4'-phosphoryl)serine is present on Ser-1939. Residues Asp-2022–Lys-2438 are condensation (C) domain 2. Residues Ala-2459–Arg-2859 are adenylation (A) domain 3. The Carrier 3 domain occupies Gly-2976–His-3052. The segment at Pro-2977–Gln-3049 is thiolation (T) domain 3. Ser-3013 carries the O-(pantetheine 4'-phosphoryl)serine modification. Positions Asp-3089 to Thr-3482 are condensation (C) domain 3. The interval Val-3523–Leu-3873 is adenylation (A) domain 4. Residues Ile-4005–Ile-4081 form the Carrier 4 domain. Residues Thr-4010–Ala-4078 form a thiolation (T) domain 4 region. Residue Ser-4042 is modified to O-(pantetheine 4'-phosphoryl)serine. A condensation (C) domain 4 region spans residues Lys-4123 to Asp-4549. The interval Gln-4574–Arg-4982 is adenylation (A) domain 5. The 77-residue stretch at Pro-5118–Ser-5194 folds into the Carrier 5 domain. A thiolation (T) domain 5 region spans residues Glu-5123–Ser-5191. O-(pantetheine 4'-phosphoryl)serine is present on Ser-5155. Positions Ala-5260 to Ser-5556 are condensation (C) domain 5.

This sequence belongs to the NRP synthetase family.

Its pathway is mycotoxin biosynthesis. Nonribosomal peptide synthetase; part of the gene cluster that mediates the biosynthesis of the mycotoxin cyclochlorotine, a hepatotoxic and carcinogenic cyclic chlorinated pentapeptide. Within the pathway, The NRPS cctN initially catalyzes the condensation of L-serine (Ser), Pro, L-2-aminobutyrate (2Abu), Ser, and beta-Phe in this order. During the chain elongation, side-chain hydroxy group of Ser4 would be used as a nucleophile, giving isocyclotine as a product of terminal condensation-like (CT) domain-catalyzed cyclization. After the dichlorination of Pro2 catalyzed by cctP2 to produce isocyclochlorotine, the cctO-mediated transacylation of isocyclochlorotine can furnish cyclochlorotine. The subsequent hydroxylation of cyclochlorotine by cctR yields hydroxycyclochlorotine as the final product. CctP1 probably acts as a phenylalanine aminomutase and provides the uncommon building block beta-Phe. Furthermore, 2Abu can be synthesized from threonine by one of the threonine dehydratases and transaminases localized outside of the cluster. The functions of the remaining proteins encoded by the cluster, cctM and cctT, have not been identified yet. The protein is Cyclochlorotine synthetase of Talaromyces islandicus (Penicillium islandicum).